The following is a 166-amino-acid chain: NAD(P)H-quinone oxidoreductase subunit I, chloroplastic (166 aa).

2 4Fe-4S ferredoxin-type domains span residues 55 to 84 (GRIH…VDWK) and 95 to 124 (LNYS…MTEE). Positions 64, 67, 70, 74, 104, 107, 110, and 114 each coordinate [4Fe-4S] cluster.

This sequence belongs to the complex I 23 kDa subunit family. In terms of assembly, NDH is composed of at least 16 different subunits, 5 of which are encoded in the nucleus. It depends on [4Fe-4S] cluster as a cofactor.

The protein localises to the plastid. The protein resides in the chloroplast thylakoid membrane. The enzyme catalyses a plastoquinone + NADH + (n+1) H(+)(in) = a plastoquinol + NAD(+) + n H(+)(out). It catalyses the reaction a plastoquinone + NADPH + (n+1) H(+)(in) = a plastoquinol + NADP(+) + n H(+)(out). Functionally, NDH shuttles electrons from NAD(P)H:plastoquinone, via FMN and iron-sulfur (Fe-S) centers, to quinones in the photosynthetic chain and possibly in a chloroplast respiratory chain. The immediate electron acceptor for the enzyme in this species is believed to be plastoquinone. Couples the redox reaction to proton translocation, and thus conserves the redox energy in a proton gradient. This chain is NAD(P)H-quinone oxidoreductase subunit I, chloroplastic, found in Palafoxia arida (Spanish needles).